A 497-amino-acid polypeptide reads, in one-letter code: Probable cytosol aminopeptidase (497 aa).

Mn(2+) contacts are provided by K264 and D269. K276 is an active-site residue. Mn(2+) contacts are provided by D287, D346, and E348. R350 is an active-site residue.

This sequence belongs to the peptidase M17 family. Mn(2+) is required as a cofactor.

The protein localises to the cytoplasm. The enzyme catalyses Release of an N-terminal amino acid, Xaa-|-Yaa-, in which Xaa is preferably Leu, but may be other amino acids including Pro although not Arg or Lys, and Yaa may be Pro. Amino acid amides and methyl esters are also readily hydrolyzed, but rates on arylamides are exceedingly low.. It carries out the reaction Release of an N-terminal amino acid, preferentially leucine, but not glutamic or aspartic acids.. Functionally, presumably involved in the processing and regular turnover of intracellular proteins. Catalyzes the removal of unsubstituted N-terminal amino acids from various peptides. This chain is Probable cytosol aminopeptidase, found in Persephonella marina (strain DSM 14350 / EX-H1).